A 239-amino-acid chain; its full sequence is Ribonuclease PH (239 aa).

Phosphate is bound by residues Arg87 and 125 to 127 (GTR).

The protein belongs to the RNase PH family. In terms of assembly, homohexameric ring arranged as a trimer of dimers.

The enzyme catalyses tRNA(n+1) + phosphate = tRNA(n) + a ribonucleoside 5'-diphosphate. Functionally, phosphorolytic 3'-5' exoribonuclease that plays an important role in tRNA 3'-end maturation. Removes nucleotide residues following the 3'-CCA terminus of tRNAs; can also add nucleotides to the ends of RNA molecules by using nucleoside diphosphates as substrates, but this may not be physiologically important. Probably plays a role in initiation of 16S rRNA degradation (leading to ribosome degradation) during starvation. This chain is Ribonuclease PH, found in Ectopseudomonas mendocina (strain ymp) (Pseudomonas mendocina).